The primary structure comprises 89 residues: Large ribosomal subunit protein eL34 (89 aa).

Residues 1 to 22 (MPAPRYKSGSSKKVYRKAPGNS) form a disordered region.

It belongs to the eukaryotic ribosomal protein eL34 family.

This is Large ribosomal subunit protein eL34 from Methanococcus maripaludis (strain C7 / ATCC BAA-1331).